The sequence spans 327 residues: Neurogenic differentiation factor 6-A (327 aa).

The segment at 17-85 (GANFPRDCVG…KKMTKARVDR (69 aa)) is disordered. A compositionally biased stretch (basic and acidic residues) spans 24 to 46 (CVGDLKGNKQEPFEKEETLSHVM). Acidic residues predominate over residues 47–63 (DDDDSEKDEDEREDGQD). Basic residues predominate over residues 68–80 (PRRRGPRKKKMTK). Residues 74–80 (RKKKMTK) carry the Nuclear localization signal motif. One can recognise a bHLH domain in the interval 88-140 (VRRMEANARERNRMHGLNNALDSLRKVVPCYSKTQKLSKIETLRLAKNYIWAL).

As to quaternary structure, efficient DNA binding requires dimerization with another bHLH protein. Embryonic olfactory bulbs. In adult, expressed in brain, eye, intestine, muscle, ovary and skin.

Its subcellular location is the nucleus. Differentiation factor required for neurogenesis. Acts as an upstream activator of isl1. This chain is Neurogenic differentiation factor 6-A, found in Danio rerio (Zebrafish).